The chain runs to 338 residues: Fructose-1,6-bisphosphatase class 1 (338 aa).

Residues Glu-92, Asp-115, Leu-117, and Asp-118 each coordinate Mg(2+). Residues 118 to 121 (DGSS), Asn-211, Tyr-244, and Lys-274 contribute to the substrate site. Glu-280 provides a ligand contact to Mg(2+).

It belongs to the FBPase class 1 family. In terms of assembly, homotetramer. Mg(2+) serves as cofactor.

Its subcellular location is the cytoplasm. The catalysed reaction is beta-D-fructose 1,6-bisphosphate + H2O = beta-D-fructose 6-phosphate + phosphate. Its pathway is carbohydrate biosynthesis; gluconeogenesis. This is Fructose-1,6-bisphosphatase class 1 from Photobacterium profundum (strain SS9).